Reading from the N-terminus, the 106-residue chain is Minor capsid protein VP2 (106 aa).

The protein belongs to the vesivirus VP2 protein family. In terms of assembly, homooligomer. The portal-like structure consists in 12 copies of VP2. Interacts with capsid protein VP1.

It is found in the virion. Its subcellular location is the host cytoplasm. Its function is as follows. Minor structural protein that forms a portal-like structure at a unique three-fold axis of symmetry, following binding to the host receptor. The virion attaches to feline junctional adhesion molecule A (F11R). Once attached, the virion is endocytosed. Acidification of the endosome induces conformational change of capsid protein thereby injecting virus genomic RNA into host cytoplasm. The channel formed by VP2 may allow the delivery of the viral genome through the host endosomal membrane. The polypeptide is Minor capsid protein VP2 (Feline calicivirus (strain CFI/68 FIV) (FCV)).